The chain runs to 235 residues: Adapter protein MecA (235 aa).

Over residues 113–135 (LRQSDKGDIVKSKVSSSDHKDGS) the composition is skewed to basic and acidic residues. Residues 113-136 (LRQSDKGDIVKSKVSSSDHKDGSQ) form a disordered region.

It belongs to the MecA family. As to quaternary structure, homodimer.

Enables the recognition and targeting of unfolded and aggregated proteins to the ClpC protease or to other proteins involved in proteolysis. This is Adapter protein MecA from Leuconostoc mesenteroides subsp. mesenteroides (strain ATCC 8293 / DSM 20343 / BCRC 11652 / CCM 1803 / JCM 6124 / NCDO 523 / NBRC 100496 / NCIMB 8023 / NCTC 12954 / NRRL B-1118 / 37Y).